The primary structure comprises 210 residues: Redox-sensing transcriptional repressor Rex (210 aa).

The H-T-H motif DNA-binding region spans K17–F56. G91–G96 contributes to the NAD(+) binding site.

The protein belongs to the transcriptional regulatory Rex family. As to quaternary structure, homodimer.

It localises to the cytoplasm. Modulates transcription in response to changes in cellular NADH/NAD(+) redox state. The sequence is that of Redox-sensing transcriptional repressor Rex from Clostridium botulinum (strain Loch Maree / Type A3).